The following is a 333-amino-acid chain: Ketol-acid reductoisomerase (NADP(+)) (333 aa).

A KARI N-terminal Rossmann domain is found at 2–182 (AELFYDDDAD…GGTRAGVIKT (181 aa)). Residues 25–28 (YGSQ), Ser-51, Ser-53, and 83–86 (DPIQ) each bind NADP(+). Residue His-108 is part of the active site. Gly-134 is an NADP(+) binding site. Positions 183-328 (TFTEETETDL…RELRKLMSWV (146 aa)) constitute a KARI C-terminal knotted domain. Positions 191, 195, 227, and 231 each coordinate Mg(2+). Ser-252 serves as a coordination point for substrate.

The protein belongs to the ketol-acid reductoisomerase family. The cofactor is Mg(2+).

It catalyses the reaction (2R)-2,3-dihydroxy-3-methylbutanoate + NADP(+) = (2S)-2-acetolactate + NADPH + H(+). The enzyme catalyses (2R,3R)-2,3-dihydroxy-3-methylpentanoate + NADP(+) = (S)-2-ethyl-2-hydroxy-3-oxobutanoate + NADPH + H(+). Its pathway is amino-acid biosynthesis; L-isoleucine biosynthesis; L-isoleucine from 2-oxobutanoate: step 2/4. It functions in the pathway amino-acid biosynthesis; L-valine biosynthesis; L-valine from pyruvate: step 2/4. In terms of biological role, involved in the biosynthesis of branched-chain amino acids (BCAA). Catalyzes an alkyl-migration followed by a ketol-acid reduction of (S)-2-acetolactate (S2AL) to yield (R)-2,3-dihydroxy-isovalerate. In the isomerase reaction, S2AL is rearranged via a Mg-dependent methyl migration to produce 3-hydroxy-3-methyl-2-ketobutyrate (HMKB). In the reductase reaction, this 2-ketoacid undergoes a metal-dependent reduction by NADPH to yield (R)-2,3-dihydroxy-isovalerate. The polypeptide is Ketol-acid reductoisomerase (NADP(+)) (Streptomyces griseus subsp. griseus (strain JCM 4626 / CBS 651.72 / NBRC 13350 / KCC S-0626 / ISP 5235)).